A 519-amino-acid chain; its full sequence is Cytochrome P450 709B1 (519 aa).

Residues Met1–Phe21 form a helical membrane-spanning segment. Cys464 contributes to the heme binding site.

Belongs to the cytochrome P450 family. Heme is required as a cofactor. Highly expressed in siliques.

The protein localises to the membrane. Involved in stress response. Does not function as cytokinin hydroxylase in yeast heterologous system. The chain is Cytochrome P450 709B1 from Arabidopsis thaliana (Mouse-ear cress).